Reading from the N-terminus, the 432-residue chain is 3-phosphoshikimate 1-carboxyvinyltransferase (432 aa).

Lys-21, Ser-22, and Arg-26 together coordinate 3-phosphoshikimate. Lys-21 serves as a coordination point for phosphoenolpyruvate. Residues Gly-93 and Arg-121 each coordinate phosphoenolpyruvate. The 3-phosphoshikimate site is built by Ser-166, Gln-168, Asp-318, and Lys-345. Gln-168 contributes to the phosphoenolpyruvate binding site. Catalysis depends on Asp-318, which acts as the Proton acceptor. Phosphoenolpyruvate is bound by residues Arg-349 and Arg-391.

The protein belongs to the EPSP synthase family. As to quaternary structure, monomer.

The protein localises to the cytoplasm. It carries out the reaction 3-phosphoshikimate + phosphoenolpyruvate = 5-O-(1-carboxyvinyl)-3-phosphoshikimate + phosphate. Its pathway is metabolic intermediate biosynthesis; chorismate biosynthesis; chorismate from D-erythrose 4-phosphate and phosphoenolpyruvate: step 6/7. Functionally, catalyzes the transfer of the enolpyruvyl moiety of phosphoenolpyruvate (PEP) to the 5-hydroxyl of shikimate-3-phosphate (S3P) to produce enolpyruvyl shikimate-3-phosphate and inorganic phosphate. In Persephonella marina (strain DSM 14350 / EX-H1), this protein is 3-phosphoshikimate 1-carboxyvinyltransferase.